The primary structure comprises 442 residues: Sexual development regulator VELC (442 aa).

2 disordered regions span residues 1–192 (MPVH…ASLA) and 396–442 (KKGN…IRRS). Residues 45 to 54 (IAPPPPPTPP) are compositionally biased toward pro residues. Over residues 79-97 (PGPRRPSNPSSPQHPQQPG) the composition is skewed to low complexity. In terms of domain architecture, Velvet spans 213 to 396 (FSTSEYHLHV…KEQGCLISIK (184 aa)). Positions 401–411 (KGGGGGGGGPS) are enriched in gly residues. The segment covering 433–442 (AGKRKRIRRS) has biased composition (basic residues).

It belongs to the velvet family. VelC subfamily.

The protein resides in the nucleus. In terms of biological role, velvet-domain-containing protein that acts as a positive regulator of sexual development. Plays an important role in pathogenicity through regulating positively appressorium-mediated penetration and invasive growth. This Pyricularia oryzae (strain 70-15 / ATCC MYA-4617 / FGSC 8958) (Rice blast fungus) protein is Sexual development regulator VELC.